The sequence spans 282 residues: Acyl-CoA-binding domain-containing protein 6 (282 aa).

The disordered stretch occupies residues M1 to P34. S41 carries the phosphoserine modification. Positions L42–P127 constitute an ACB domain. An acyl-CoA-binding positions include Y69–K73 and K95. Phosphoserine is present on S106. An an acyl-CoA-binding site is contributed by Y114. ANK repeat units lie at residues E191–C220 and E224–L253.

In terms of assembly, monomer.

The protein resides in the cytoplasm. Its subcellular location is the nucleus. Binds long-chain acyl-coenzyme A molecules with a strong preference for unsaturated C18:1-CoA, lower affinity for unsaturated C20:4-CoA, and very weak affinity for saturated C16:0-CoA. Does not bind fatty acids. Plays a role in protein N-myristoylation. This is Acyl-CoA-binding domain-containing protein 6 (Acbd6) from Rattus norvegicus (Rat).